A 233-amino-acid polypeptide reads, in one-letter code: uncharacterized protein (233 aa).

A helical transmembrane segment spans residues 21 to 41 (LNILIAIVSILIVVVAANLFI). The disordered stretch occupies residues 44 to 163 (PSSKDVSKDS…GEHAATYDSS (120 aa)). Basic and acidic residues-rich tracts occupy residues 48 to 57 (DVSKDSETAQ), 66 to 108 (KTEK…KKDD), and 135 to 144 (DVEKTYENPD).

The protein resides in the cell membrane. This is an uncharacterized protein from Bacillus subtilis (strain 168).